Reading from the N-terminus, the 147-residue chain is Hemoglobin subunit epsilon (147 aa).

Residues 3-147 (HFTAEEKAAV…VAIALAHKYH (145 aa)) enclose the Globin domain. Phosphoserine is present on residues Ser14 and Ser51. 2 residues coordinate heme b: His64 and His93.

This sequence belongs to the globin family. In terms of assembly, heterotetramer of two alpha chains and two epsilon chains in early embryonic hemoglobin Gower-2; two zeta chains and two epsilon chains in early embryonic hemoglobin Gower-1. In terms of tissue distribution, red blood cells.

The epsilon chain is a beta-type chain of early mammalian embryonic hemoglobin. This is Hemoglobin subunit epsilon (HBE1) from Symphalangus syndactylus (Siamang).